The chain runs to 575 residues: Eukaryotic translation initiation factor 3 subunit D (575 aa).

2 disordered regions span residues 36-66 and 103-177; these read PYSK…YGNR and STRT…DASV. Residues 39–59 show a composition bias toward basic and acidic residues; it reads KGDKLGRMADWTEGKDRERGG. Residues 109-144 are compositionally biased toward gly residues; the sequence is FGRGGGTVFGRGRGQRGGQAQRGGRGTFQRVGGRGG. The segment covering 163–174 has biased composition (basic and acidic residues); sequence GWRDDKPQRNRD. The tract at residues 302–316 is RNA gate; sequence NLDMVTVNENAADAP.

This sequence belongs to the eIF-3 subunit D family. In terms of assembly, component of the eukaryotic translation initiation factor 3 (eIF-3) complex.

The protein localises to the cytoplasm. MRNA cap-binding component of the eukaryotic translation initiation factor 3 (eIF-3) complex, which is involved in protein synthesis of a specialized repertoire of mRNAs and, together with other initiation factors, stimulates binding of mRNA and methionyl-tRNAi to the 40S ribosome. The eIF-3 complex specifically targets and initiates translation of a subset of mRNAs involved in cell proliferation. In the eIF-3 complex, eif3d specifically recognizes and binds the 7-methylguanosine cap of a subset of mRNAs. The polypeptide is Eukaryotic translation initiation factor 3 subunit D (Phaeosphaeria nodorum (strain SN15 / ATCC MYA-4574 / FGSC 10173) (Glume blotch fungus)).